The sequence spans 187 residues: PRA1 family protein G1 (187 aa).

3 helical membrane passes run 84–104, 125–145, and 146–166; these read LFLIGDPMALVTVASFVAMWL, VIVFGLILGSLWALWFINSLQ, and CLILGVVTSVLLCLVHAIIRN.

Belongs to the PRA1 family. As to expression, expressed in roots and lateral roots.

The protein localises to the endosome membrane. In terms of biological role, may be involved in both secretory and endocytic intracellular trafficking in the endosomal/prevacuolar compartments. This Arabidopsis thaliana (Mouse-ear cress) protein is PRA1 family protein G1 (PRA1G1).